A 569-amino-acid chain; its full sequence is Lysine--tRNA ligase (569 aa).

2 residues coordinate Mg(2+): Glu414 and Glu421.

It belongs to the class-II aminoacyl-tRNA synthetase family. As to quaternary structure, homodimer. The cofactor is Mg(2+).

Its subcellular location is the cytoplasm. It catalyses the reaction tRNA(Lys) + L-lysine + ATP = L-lysyl-tRNA(Lys) + AMP + diphosphate. This chain is Lysine--tRNA ligase, found in Christiangramia forsetii (strain DSM 17595 / CGMCC 1.15422 / KT0803) (Gramella forsetii).